The following is a 451-amino-acid chain: Gamma-aminobutyric acid receptor subunit alpha-2 (451 aa).

An N-terminal signal peptide occupies residues 1 to 28; the sequence is MKTKLNIYNMQFLLFVFLVWDPARLVLA. Topologically, residues 29 to 249 are extracellular; sequence NIQEDEAKNN…MTAHFHLKRK (221 aa). Residue Asn-38 is glycosylated (N-linked (GlcNAc...) asparagine). Arg-94 contributes to the 4-aminobutanoate binding site. Residue Asn-138 is glycosylated (N-linked (GlcNAc...) asparagine). Thr-157 is a binding site for 4-aminobutanoate. Cys-166 and Cys-180 form a disulfide bridge. The helical transmembrane segment at 250–270 threads the bilayer; it reads IGYFVIQTYLPCIMTVILSQV. The Cytoplasmic portion of the chain corresponds to 271–280; sequence SFWLNRESVP. Residues 281–300 traverse the membrane as a helical segment; it reads ARTVFGVTTVLTMTTLSISA. Residues 301–311 are Extracellular-facing; the sequence is RNSLPKVAYAT. Residues 312–332 form a helical membrane-spanning segment; it reads AMDWFIAVCYAFVFSALIEFA. At 333-420 the chain is on the cytoplasmic side; it reads TVNYFTKRGW…FNSVSKIDRM (88 aa). A helical membrane pass occupies residues 421–441; the sequence is SRIVFPVLFGTFNLVYWATYL. At 442–451 the chain is on the extracellular side; sequence NREPVLGVSP.

The protein belongs to the ligand-gated ion channel (TC 1.A.9) family. Gamma-aminobutyric acid receptor (TC 1.A.9.5) subfamily. GABRA2 sub-subfamily. In terms of assembly, heteropentamer, formed by a combination of alpha (GABRA1-6), beta (GABRB1-3), gamma (GABRG1-3), delta (GABRD), epsilon (GABRE), rho (GABRR1-3), pi (GABRP) and theta (GABRQ) subunits, each subunit exhibiting distinct physiological and pharmacological properties. Interacts with UBQLN1. Interacts with KIF21B. Interacts with LHFPL4. Interacts with SHISA7; interaction leads to the regulation of GABA(A) receptor trafficking, channel deactivation kinetics and pharmacology. Post-translationally, glycosylated.

The protein resides in the postsynaptic cell membrane. It is found in the cell membrane. Its subcellular location is the cytoplasmic vesicle membrane. It localises to the cell projection. The protein localises to the dendrite. It catalyses the reaction chloride(in) = chloride(out). Activated by pentobarbital. Inhibited by the antagonist bicuculline. In terms of biological role, alpha subunit of the heteropentameric ligand-gated chloride channel gated by gamma-aminobutyric acid (GABA), a major inhibitory neurotransmitter in the brain. GABA-gated chloride channels, also named GABA(A) receptors (GABAAR), consist of five subunits arranged around a central pore and contain GABA active binding site(s) located at the alpha and beta subunit interfaces. When activated by GABA, GABAARs selectively allow the flow of chloride anions across the cell membrane down their electrochemical gradient. Chloride influx into the postsynaptic neuron following GABAAR opening decreases the neuron ability to generate a new action potential, thereby reducing nerve transmission. The alpha-2 subunit exhibits synaptogenic activity together with beta-2 and very little to no activity together with beta-3, the gamma-2 subunit being necessary but not sufficient to induce rapid synaptic contacts formation. The protein is Gamma-aminobutyric acid receptor subunit alpha-2 of Homo sapiens (Human).